The following is a 142-amino-acid chain: UPF0179 protein PH1477 (142 aa).

The protein belongs to the UPF0179 family.

In Pyrococcus horikoshii (strain ATCC 700860 / DSM 12428 / JCM 9974 / NBRC 100139 / OT-3), this protein is UPF0179 protein PH1477.